The sequence spans 249 residues: Segregation and condensation protein A (249 aa).

This sequence belongs to the ScpA family. Component of a cohesin-like complex composed of ScpA, ScpB and the Smc homodimer, in which ScpA and ScpB bind to the head domain of Smc. The presence of the three proteins is required for the association of the complex with DNA.

The protein localises to the cytoplasm. Functionally, participates in chromosomal partition during cell division. May act via the formation of a condensin-like complex containing Smc and ScpB that pull DNA away from mid-cell into both cell halves. This is Segregation and condensation protein A from Listeria monocytogenes serotype 4a (strain HCC23).